The sequence spans 179 residues: Ribosomal-protein-serine acetyltransferase (179 aa).

One can recognise an N-acetyltransferase domain in the interval Leu11–Tyr172.

It belongs to the acetyltransferase family. RimL subfamily.

The protein resides in the cytoplasm. It carries out the reaction N-terminal L-seryl-[ribosomal protein bL12] + acetyl-CoA = N-terminal N(alpha)-acetyl-L-seryl-[ribosomal protein bL12] + CoA + H(+). Its function is as follows. This enzyme acetylates the N-terminal serine of ribosomal protein bL12, converting it into the acetylated form of bL12 known as bL7. The sequence is that of Ribosomal-protein-serine acetyltransferase from Escherichia coli (strain K12).